Reading from the N-terminus, the 382-residue chain is ATP phosphoribosyltransferase regulatory subunit (382 aa).

It belongs to the class-II aminoacyl-tRNA synthetase family. HisZ subfamily. As to quaternary structure, heteromultimer composed of HisG and HisZ subunits.

It is found in the cytoplasm. Its pathway is amino-acid biosynthesis; L-histidine biosynthesis; L-histidine from 5-phospho-alpha-D-ribose 1-diphosphate: step 1/9. In terms of biological role, required for the first step of histidine biosynthesis. May allow the feedback regulation of ATP phosphoribosyltransferase activity by histidine. This is ATP phosphoribosyltransferase regulatory subunit from Acidovorax sp. (strain JS42).